The primary structure comprises 446 residues: Probable arogenate/prephenate dehydrogenase (446 aa).

The Prephenate/arogenate dehydrogenase domain maps to leucine 6–serine 288.

This sequence in the N-terminal section; belongs to the prephenate/arogenate dehydrogenase family.

The sequence is that of Probable arogenate/prephenate dehydrogenase from Methanocaldococcus jannaschii (strain ATCC 43067 / DSM 2661 / JAL-1 / JCM 10045 / NBRC 100440) (Methanococcus jannaschii).